The sequence spans 336 residues: Foldase protein PrsA (336 aa).

The signal sequence occupies residues 1-22 (MKSAKKLLSVLCLGIFILTFTA). Residue Cys-23 is the site of N-palmitoyl cysteine attachment. A lipid anchor (S-diacylglycerol cysteine) is attached at Cys-23. Residues 194–286 (PNTMNVSHIL…FGYHIIKINS (93 aa)) form the PpiC domain.

Belongs to the PrsA family.

It localises to the cell membrane. The enzyme catalyses [protein]-peptidylproline (omega=180) = [protein]-peptidylproline (omega=0). In terms of biological role, plays a major role in protein secretion by helping the post-translocational extracellular folding of several secreted proteins. In Clostridium botulinum (strain 657 / Type Ba4), this protein is Foldase protein PrsA.